The primary structure comprises 189 residues: Ribosome maturation factor RimM (189 aa).

The region spanning 113–189 (DGEYYWVDLL…TIVADWQPDY (77 aa)) is the PRC barrel domain.

Belongs to the RimM family. In terms of assembly, binds ribosomal protein uS19.

It is found in the cytoplasm. Functionally, an accessory protein needed during the final step in the assembly of 30S ribosomal subunit, possibly for assembly of the head region. Essential for efficient processing of 16S rRNA. May be needed both before and after RbfA during the maturation of 16S rRNA. It has affinity for free ribosomal 30S subunits but not for 70S ribosomes. In Delftia acidovorans (strain DSM 14801 / SPH-1), this protein is Ribosome maturation factor RimM.